The primary structure comprises 93 residues: Small ribosomal subunit protein uS19 (93 aa).

The protein belongs to the universal ribosomal protein uS19 family.

In terms of biological role, protein S19 forms a complex with S13 that binds strongly to the 16S ribosomal RNA. This chain is Small ribosomal subunit protein uS19, found in Geobacter metallireducens (strain ATCC 53774 / DSM 7210 / GS-15).